We begin with the raw amino-acid sequence, 298 residues long: Junctional adhesion molecule B (298 aa).

The first 28 residues, 1-28, serve as a signal peptide directing secretion; that stretch reads MARSPQGLLMLLLLHYLIVALDYHKANG. The Extracellular portion of the chain corresponds to 29–236; sequence FSASKDHRQE…GKRMQVDVLN (208 aa). The 97-residue stretch at 32-128 folds into the Ig-like V-type domain; that stretch reads SKDHRQEVTV…GQNLQEDKVM (97 aa). 2 disulfide bridges follow: C51/C110 and C156/C214. N99 is a glycosylation site (N-linked (GlcNAc...) asparagine). The Ig-like C2-type domain maps to 135 to 238; the sequence is PAVPACEVPT…RMQVDVLNIS (104 aa). Residues 237–257 form a helical membrane-spanning segment; it reads ISGIIATVVVVAFVISVCGLG. Residues 258-298 lie on the Cytoplasmic side of the membrane; the sequence is TCYAQRKGYFSKETSFQKGSPASKVTTMSENDFKHTKSFII.

Belongs to the immunoglobulin superfamily. In terms of processing, the expression in Sertoli cells is regulated by TGFB3 through ubiquitin-mediated proteasomal degradation. Expressed by bone marrow stromal cells (at protein level). Expressed in skin (at protein level). Expressed in testis by Sertoli cells (at protein level). Expressed by dorsal root ganglion and spinal cord neurons.

It localises to the cell membrane. It is found in the cell junction. Its subcellular location is the tight junction. Functionally, junctional adhesion protein that mediates heterotypic cell-cell interactions with its cognate receptor JAM3 to regulate different cellular processes. Plays a role in homing and mobilization of hematopoietic stem and progenitor cells within the bone marrow. At the surface of bone marrow stromal cells, it contributes to the retention of the hematopoietic stem and progenitor cells expressing JAM3. Plays a central role in leukocytes extravasation by facilitating not only transmigration but also tethering and rolling of leukocytes along the endothelium. Tethering and rolling of leukocytes are dependent on the binding by JAM2 of the integrin alpha-4/beta-1. Plays a role in spermatogenesis where JAM2 and JAM3, which are respectively expressed by Sertoli and germ cells, mediate an interaction between both cell types and play an essential role in the anchorage of germ cells onto Sertoli cells and the assembly of cell polarity complexes during spermatid differentiation. Also functions as an inhibitory somatodendritic cue that prevents the myelination of non-axonal parts of neurons. During myogenesis, it is involved in myocyte fusion. May also play a role in angiogenesis. This Mus musculus (Mouse) protein is Junctional adhesion molecule B.